The chain runs to 142 residues: Large ribosomal subunit protein uL13 (142 aa).

This sequence belongs to the universal ribosomal protein uL13 family. Part of the 50S ribosomal subunit.

Functionally, this protein is one of the early assembly proteins of the 50S ribosomal subunit, although it is not seen to bind rRNA by itself. It is important during the early stages of 50S assembly. The polypeptide is Large ribosomal subunit protein uL13 (Glaesserella parasuis serovar 5 (strain SH0165) (Haemophilus parasuis)).